Reading from the N-terminus, the 801-residue chain is Phenylalanine--tRNA ligase beta subunit (801 aa).

The 115-residue stretch at 39-153 (AEGLSKLVVG…EGAIPGDSIF (115 aa)) folds into the tRNA-binding domain. In terms of domain architecture, B5 spans 406–481 (TEPVEVSTTL…RIYGYEKLPT (76 aa)). D459, D465, E468, and E469 together coordinate Mg(2+). The FDX-ACB domain maps to 708–801 (TKYPSVSRDI…LVEKVNAEIR (94 aa)).

Belongs to the phenylalanyl-tRNA synthetase beta subunit family. Type 1 subfamily. In terms of assembly, tetramer of two alpha and two beta subunits. Requires Mg(2+) as cofactor.

It localises to the cytoplasm. It catalyses the reaction tRNA(Phe) + L-phenylalanine + ATP = L-phenylalanyl-tRNA(Phe) + AMP + diphosphate + H(+). This is Phenylalanine--tRNA ligase beta subunit from Streptococcus agalactiae serotype V (strain ATCC BAA-611 / 2603 V/R).